An 83-amino-acid polypeptide reads, in one-letter code: Protein CASPARIAN STRIP INTEGRITY FACTOR 2 (83 aa).

The N-terminal stretch at 1–28 (MGLLPLVKKLGFIIFLLVSASAFALCSA) is a signal peptide. The segment at 61 to 83 (SRDYGHSSPKPKLVRPPFKLIPN) is disordered. Position 64 is a sulfotyrosine (tyrosine 64). A hydroxyproline mark is found at proline 69 and proline 71.

In terms of assembly, interacts with the specific receptor kinases GSO1 and GSO2. As to expression, expressed exclusively in the root stele.

Functionally, peptide hormone required for contiguous Casparian strip diffusion barrier formation in roots via the regulation of CASPs protein expression and distribution in a GSO1-GSO2 signaling pathway. The Casparian strip is required for ion homeostasis (e.g. iron and potassium ions). The sequence is that of Protein CASPARIAN STRIP INTEGRITY FACTOR 2 from Arabidopsis thaliana (Mouse-ear cress).